Here is a 447-residue protein sequence, read N- to C-terminus: Tubulin alpha chain (447 aa).

Residues Q11, E71, G144, T145, T179, N206, and N228 each coordinate GTP. E71 contributes to the Mg(2+) binding site. The active site involves E254.

This sequence belongs to the tubulin family. Dimer of alpha and beta chains. A typical microtubule is a hollow water-filled tube with an outer diameter of 25 nm and an inner diameter of 15 nM. Alpha-beta heterodimers associate head-to-tail to form protofilaments running lengthwise along the microtubule wall with the beta-tubulin subunit facing the microtubule plus end conferring a structural polarity. Microtubules usually have 13 protofilaments but different protofilament numbers can be found in some organisms and specialized cells. Mg(2+) is required as a cofactor.

Its subcellular location is the cytoplasm. It is found in the cytoskeleton. The enzyme catalyses GTP + H2O = GDP + phosphate + H(+). Tubulin is the major constituent of microtubules, a cylinder consisting of laterally associated linear protofilaments composed of alpha- and beta-tubulin heterodimers. Microtubules grow by the addition of GTP-tubulin dimers to the microtubule end, where a stabilizing cap forms. Below the cap, tubulin dimers are in GDP-bound state, owing to GTPase activity of alpha-tubulin. This is Tubulin alpha chain (TUBA) from Avena sativa (Oat).